Reading from the N-terminus, the 356-residue chain is Cell division protein ZipA (356 aa).

Topologically, residues 1–6 (MEDLQL) are periplasmic. A helical transmembrane segment spans residues 7–27 (VLFVLGAIAIVAVLVHGFWSI). The Cytoplasmic segment spans residues 28–356 (RRQQPKSLKD…DYLHRIRANA (329 aa)). Residues 132 to 155 (PAQPDFSLQPPVAKEQHRGPKVSR) are disordered.

It belongs to the ZipA family. Interacts with FtsZ via their C-terminal domains.

It localises to the cell inner membrane. Its function is as follows. Essential cell division protein that stabilizes the FtsZ protofilaments by cross-linking them and that serves as a cytoplasmic membrane anchor for the Z ring. Also required for the recruitment to the septal ring of downstream cell division proteins. The protein is Cell division protein ZipA of Shewanella baltica (strain OS185).